The chain runs to 271 residues: ATP synthase subunit a (271 aa).

5 consecutive transmembrane segments (helical) span residues Phe-38–Ala-58, Leu-100–Leu-120, Asp-146–Ile-166, Leu-220–Pro-240, and Ala-242–Val-262.

It belongs to the ATPase A chain family. F-type ATPases have 2 components, CF(1) - the catalytic core - and CF(0) - the membrane proton channel. CF(1) has five subunits: alpha(3), beta(3), gamma(1), delta(1), epsilon(1). CF(0) has three main subunits: a(1), b(2) and c(9-12). The alpha and beta chains form an alternating ring which encloses part of the gamma chain. CF(1) is attached to CF(0) by a central stalk formed by the gamma and epsilon chains, while a peripheral stalk is formed by the delta and b chains.

The protein localises to the cell inner membrane. Functionally, key component of the proton channel; it plays a direct role in the translocation of protons across the membrane. In Enterobacter sp. (strain 638), this protein is ATP synthase subunit a.